Consider the following 522-residue polypeptide: Signal transduction histidine-protein kinase/phosphatase MprB (522 aa).

The Cytoplasmic portion of the chain corresponds to 1–30 (MIRLHRPQRPPLRAPLRATPSLSLRWRVML). Residues 31–51 (LAMSMVAMVVVLMAFAVYAVI) form a helical membrane-spanning segment. At 52-167 (SAALYSDIDN…PTEAVMNKLR (116 aa)) the chain is on the extracellular side. Residues 168-188 (WVLLIVGGVGVAVAAVAGGMV) form a helical membrane-spanning segment. Residues 189–522 (TRAGLRPVAR…SVDSQSARAR (334 aa)) lie on the Cytoplasmic side of the membrane. Positions 190–242 (RAGLRPVARLTEAAERVARTDDLRPIPVFGSDELARLTESFNLMLRALAESRE) constitute an HAMP domain. The 221-residue stretch at 250-470 (DAGHELRTPL…SFYVLLPGRP (221 aa)) folds into the Histidine kinase domain. H253 bears the Phosphohistidine; by autocatalysis mark. Residues 468–522 (GRPLPPAGHSTPAGESETDKAEAATDPAVPVAGDTANSRESANVISVDSQSARAR) form a disordered region. A compositionally biased stretch (polar residues) spans 502–522 (TANSRESANVISVDSQSARAR).

Requires Mg(2+) as cofactor. Mn(2+) serves as cofactor. Post-translationally, autophosphorylated.

The protein resides in the cell membrane. The enzyme catalyses ATP + protein L-histidine = ADP + protein N-phospho-L-histidine.. In terms of biological role, member of the two-component regulatory system MprB/MprA which contributes to maintaining a balance among several systems involved in stress resistance and is required for establishment and maintenance of persistent infection in the host. In response to environmental signals MprB acts both as a membrane-associated protein kinase that undergoes autophosphorylation and subsequently transfers the phosphate to MprA, and a protein phosphatase that dephosphorylates phospho-MprA. This Mycobacterium avium (strain 104) protein is Signal transduction histidine-protein kinase/phosphatase MprB (mprB).